The sequence spans 277 residues: NH(3)-dependent NAD(+) synthetase (277 aa).

Position 36–43 (36–43) interacts with ATP; that stretch reads GLSGGIDS. A Mg(2+)-binding site is contributed by Asp42. Deamido-NAD(+) is bound at residue Arg118. Thr138 contacts ATP. Glu143 is a binding site for Mg(2+). ATP is bound by residues Lys167 and Ser189.

Belongs to the NAD synthetase family. As to quaternary structure, homodimer.

The catalysed reaction is deamido-NAD(+) + NH4(+) + ATP = AMP + diphosphate + NAD(+) + H(+). Its pathway is cofactor biosynthesis; NAD(+) biosynthesis; NAD(+) from deamido-NAD(+) (ammonia route): step 1/1. In terms of biological role, catalyzes the ATP-dependent amidation of deamido-NAD to form NAD. Uses ammonia as a nitrogen source. This Chlorobium phaeobacteroides (strain BS1) protein is NH(3)-dependent NAD(+) synthetase.